Here is a 288-residue protein sequence, read N- to C-terminus: Rhox homeobox family member 2B (288 aa).

Positions 16 to 136 (SPAVDDEKEL…GLEPGNAQQP (121 aa)) are disordered. The segment covering 39-48 (VKEEEEDAQP) has biased composition (acidic residues). The span at 68-80 (GEEKDGGGEEKDG) shows a compositional bias: basic and acidic residues. Positions 134–193 (QQPNVHAFTPLQLQELECIFQREQFPSEFLRRRLARSMNVTELAVQIWFENRRAKWRRHQ) form a DNA-binding region, homeobox. Positions 186-195 (RAKWRRHQRA) match the Nuclear localization signal motif.

Belongs to the paired-like homeobox family. PEPP subfamily. Expressed in testis, mainly expressed in germ cells, but also detected in somatic cells such as Sertoli cells, Leydig cells and peritubular cells.

The protein resides in the nucleus. Transcription factor maybe involved in reproductive processes. Modulates expression of target genes encoding proteins involved in processes relevant to spermatogenesis. The protein is Rhox homeobox family member 2B of Homo sapiens (Human).